Consider the following 290-residue polypeptide: Glycine--tRNA ligase alpha subunit (290 aa).

The protein belongs to the class-II aminoacyl-tRNA synthetase family. As to quaternary structure, tetramer of two alpha and two beta subunits.

The protein resides in the cytoplasm. The catalysed reaction is tRNA(Gly) + glycine + ATP = glycyl-tRNA(Gly) + AMP + diphosphate. The sequence is that of Glycine--tRNA ligase alpha subunit from Zymomonas mobilis subsp. mobilis (strain ATCC 31821 / ZM4 / CP4).